The primary structure comprises 421 residues: Putative nickel insertion protein (421 aa).

It belongs to the LarC family.

This Gloeobacter violaceus (strain ATCC 29082 / PCC 7421) protein is Putative nickel insertion protein.